The following is a 542-amino-acid chain: Sensor protein CitS (542 aa).

The Cytoplasmic segment spans residues 1 to 13; it reads MVKKRFHFSLQTK. A helical membrane pass occupies residues 14 to 34; the sequence is IMGLIAALLVFVIGVLTITLA. Topologically, residues 35–175 are extracellular; that stretch reads VQHTQGERRQ…TEQSIKKHLR (141 aa). A helical membrane pass occupies residues 176–196; that stretch reads NLSVIAVLVLLLGFIGAAVLA. At 197–542 the chain is on the cytoplasmic side; sequence KSIRKDTLGL…PFDSHRDCGG (346 aa). The PAS domain occupies 216 to 279; it reads RERNAMLFAI…MSVLEKGEML (64 aa). The 193-residue stretch at 336 to 528 folds into the Histidine kinase domain; sequence AQTHEFSNKL…VFTVFIPKEK (193 aa). Position 339 is a phosphohistidine; by autocatalysis (His-339).

Its subcellular location is the cell membrane. It carries out the reaction ATP + protein L-histidine = ADP + protein N-phospho-L-histidine.. Its function is as follows. Member of the two-component regulatory system CitT/CitS. Regulates the expression of the citM-yflN operon. Functions probably as a membrane-associated protein kinase that phosphorylates CitT in response to environmental citrate or Mg(2+)-citrate complex. The polypeptide is Sensor protein CitS (citS) (Bacillus subtilis (strain 168)).